Reading from the N-terminus, the 442-residue chain is UDP-N-acetylmuramoylalanine--D-glutamate ligase (442 aa).

113 to 119 (GSNGKTT) contributes to the ATP binding site.

The protein belongs to the MurCDEF family.

Its subcellular location is the cytoplasm. It catalyses the reaction UDP-N-acetyl-alpha-D-muramoyl-L-alanine + D-glutamate + ATP = UDP-N-acetyl-alpha-D-muramoyl-L-alanyl-D-glutamate + ADP + phosphate + H(+). It participates in cell wall biogenesis; peptidoglycan biosynthesis. Cell wall formation. Catalyzes the addition of glutamate to the nucleotide precursor UDP-N-acetylmuramoyl-L-alanine (UMA). This Coxiella burnetii (strain Dugway 5J108-111) protein is UDP-N-acetylmuramoylalanine--D-glutamate ligase.